Consider the following 440-residue polypeptide: Chromosomal replication initiator protein DnaA (440 aa).

Positions 1–72 (MTELDSLWEA…KEFAQRELGR (72 aa)) are domain I, interacts with DnaA modulators. The tract at residues 72-103 (RNIEPHYVLEGEFTYTNKKTEDDPTPSFEMDT) is domain II. Residues 104–320 (PLNPHYNFGT…GALTKVQAFA (217 aa)) form a domain III, AAA+ region region. ATP is bound by residues glycine 148, glycine 150, lysine 151, and threonine 152. Residues 321 to 440 (NLSGERITPS…ITKLKAKLRS (120 aa)) are domain IV, binds dsDNA.

Belongs to the DnaA family. As to quaternary structure, oligomerizes as a right-handed, spiral filament on DNA at oriC.

It localises to the cytoplasm. Plays an essential role in the initiation and regulation of chromosomal replication. ATP-DnaA binds to the origin of replication (oriC) to initiate formation of the DNA replication initiation complex once per cell cycle. Binds the DnaA box (a 9 base pair repeat at the origin) and separates the double-stranded (ds)DNA. Forms a right-handed helical filament on oriC DNA; dsDNA binds to the exterior of the filament while single-stranded (ss)DNA is stabiized in the filament's interior. The ATP-DnaA-oriC complex binds and stabilizes one strand of the AT-rich DNA unwinding element (DUE), permitting loading of DNA polymerase. After initiation quickly degrades to an ADP-DnaA complex that is not apt for DNA replication. Binds acidic phospholipids. The protein is Chromosomal replication initiator protein DnaA of Limosilactobacillus reuteri (strain DSM 20016) (Lactobacillus reuteri).